Here is an 872-residue protein sequence, read N- to C-terminus: Telomerase component p95 (872 aa).

Disordered stretches follow at residues 55–75 and 471–492; these read NQDQ…NSNK and KNNK…ESTS. A compositionally biased stretch (basic and acidic residues) spans 474–486; sequence KNQEETPETKDET.

Telomerase consist of two subunit, p80 and p95 that form a 1:1:1 complex with the 159 nt telomerase RNA.

The protein localises to the nucleus. It localises to the chromosome. Its subcellular location is the telomere. The enzyme catalyses DNA(n) + a 2'-deoxyribonucleoside 5'-triphosphate = DNA(n+1) + diphosphate. Its function is as follows. Ribonucleoprotein DNA polymerase that catalyzes the de novo synthesis of telomeric simple sequence repeats. Subunit p95 contains some or all of the template-independent primer DNA-binding site termed the anchor site. The polypeptide is Telomerase component p95 (Tetrahymena thermophila).